We begin with the raw amino-acid sequence, 577 residues long: Sensor histidine kinase YesM (577 aa).

Residues 1–17 (MKKRVAGWYRRMKIKDK) lie on the Cytoplasmic side of the membrane. A helical membrane pass occupies residues 18-38 (LFVFLSLIMAVSFLFVYSGVQ). Over 39–286 (YAFHVYDEQI…PFDQMFAKIS (248 aa)) the chain is Extracellular. Residues 287 to 307 (FMKTVIGTCFLLFFCVVLLFG) traverse the membrane as a helical segment. Residues 308 to 577 (RKIANSITEP…ITIPCRNEVV (270 aa)) lie on the Cytoplasmic side of the membrane. The HAMP domain occupies 312-368 (NSITEPIEQLVTAMKSVQHSGIEAGVSLSLPEHTQDEAGMLNRHFTVMMKRINELME). The Histidine kinase domain maps to 365–574 (ELMEENVEKQ…RIVITIPCRN (210 aa)). His-392 bears the Phosphohistidine; by autocatalysis mark.

The protein resides in the cell membrane. It catalyses the reaction ATP + protein L-histidine = ADP + protein N-phospho-L-histidine.. Functionally, member of the two-component regulatory system YesM/YesN. Probably activates YesN by phosphorylation. The polypeptide is Sensor histidine kinase YesM (yesM) (Bacillus subtilis (strain 168)).